The sequence spans 45 residues: Large ribosomal subunit protein bL34 (45 aa).

Belongs to the bacterial ribosomal protein bL34 family.

The polypeptide is Large ribosomal subunit protein bL34 (Opitutus terrae (strain DSM 11246 / JCM 15787 / PB90-1)).